The primary structure comprises 326 residues: Probable sodium/potassium-transporting ATPase subunit beta-3 (326 aa).

Residues 1-59 are Cytoplasmic-facing; the sequence is MMSSRTRKIYLFVFMFISTSLQLMNGEAKAEPETFRQFLYNKQKGTVLGRTGTSWCQIT. A helical; Signal-anchor for type II membrane protein membrane pass occupies residues 60-80; that stretch reads VFYIIFYIFLSAFFIGCLAIF. Topologically, residues 81–326 are lumenal; the sequence is LKTLDPKVPR…DKKPVAAPAA (246 aa). 2 N-linked (GlcNAc...) asparagine glycosylation sites follow: asparagine 144 and asparagine 147. Cysteine 234 and cysteine 291 are oxidised to a cystine.

The protein belongs to the X(+)/potassium ATPases subunit beta family. In terms of assembly, the sodium/potassium-transporting ATPase is composed of a catalytic alpha subunit, an auxiliary non-catalytic beta subunit and an additional regulatory subunit.

The protein localises to the cell membrane. In terms of biological role, this is the non-catalytic component of the active enzyme, which catalyzes the hydrolysis of ATP coupled with the exchange of Na(+) and K(+) ions across the plasma membrane. The beta subunit regulates, through assembly of alpha/beta heterodimers, the number of sodium pumps transported to the plasma membrane. Implicated in genomic response to various soil bacteria that affects fitness, lifespan and brood size. This Caenorhabditis briggsae protein is Probable sodium/potassium-transporting ATPase subunit beta-3 (nkb-3).